Here is a 424-residue protein sequence, read N- to C-terminus: Kynurenine--oxoglutarate transaminase 1 (424 aa).

Glycine 36 is a substrate binding site. Position 82 is an N6-succinyllysine (lysine 82). Asparagine 185 provides a ligand contact to substrate. Position 247 is an N6-(pyridoxal phosphate)lysine (lysine 247). Arginine 398 contacts substrate. An N6-succinyllysine modification is found at lysine 413.

The protein belongs to the class-I pyridoxal-phosphate-dependent aminotransferase family. Homodimer. The cofactor is pyridoxal 5'-phosphate.

It is found in the cytoplasm. Its subcellular location is the cytosol. The enzyme catalyses L-kynurenine + 2-oxoglutarate = kynurenate + L-glutamate + H2O. It catalyses the reaction 3-phenylpyruvate + L-glutamine = 2-oxoglutaramate + L-phenylalanine. The catalysed reaction is an S-substituted L-cysteine + H2O = a thiol + pyruvate + NH4(+). Its pathway is amino-acid degradation; L-kynurenine degradation; kynurenate from L-kynurenine: step 1/2. Catalyzes the irreversible transamination of the L-tryptophan metabolite L-kynurenine to form kynurenic acid (KA), an intermediate in the tryptophan catabolic pathway which is also a broad spectrum antagonist of the three ionotropic excitatory amino acid receptors among others. Metabolizes the cysteine conjugates of certain halogenated alkenes and alkanes to form reactive metabolites. Catalyzes the beta-elimination of S-conjugates and Se-conjugates of L-(seleno)cysteine, resulting in the cleavage of the C-S or C-Se bond. This is Kynurenine--oxoglutarate transaminase 1 (Kyat1) from Mus musculus (Mouse).